The chain runs to 138 residues: uncharacterized protein (138 aa).

Residues 1–73 (MCSAGQLLGG…NHTGEPVGDD (73 aa)) form a disordered region. A compositionally biased stretch (gly residues) spans 7–18 (LLGGGGGGGGSG). The segment covering 19-29 (GERDEDRDALA) has biased composition (basic and acidic residues). Over residues 30-43 (ERAAAGTEQESGAS) the composition is skewed to low complexity. Residues 106–126 (VIVIFFWVMLWFLGLPAFGLV) form a helical membrane-spanning segment.

It belongs to the FAM241 family.

It is found in the membrane. This is an uncharacterized protein from Bos taurus (Bovine).